The primary structure comprises 235 residues: Phosphoribosylaminoimidazole-succinocarboxamide synthase (235 aa).

It belongs to the SAICAR synthetase family.

The catalysed reaction is 5-amino-1-(5-phospho-D-ribosyl)imidazole-4-carboxylate + L-aspartate + ATP = (2S)-2-[5-amino-1-(5-phospho-beta-D-ribosyl)imidazole-4-carboxamido]succinate + ADP + phosphate + 2 H(+). Its pathway is purine metabolism; IMP biosynthesis via de novo pathway; 5-amino-1-(5-phospho-D-ribosyl)imidazole-4-carboxamide from 5-amino-1-(5-phospho-D-ribosyl)imidazole-4-carboxylate: step 1/2. This chain is Phosphoribosylaminoimidazole-succinocarboxamide synthase, found in Streptococcus thermophilus (strain ATCC BAA-491 / LMD-9).